We begin with the raw amino-acid sequence, 564 residues long: Pyranose 2-oxidase (564 aa).

A propeptide spanning residues 1-25 (MPIRLSKEKINDLLQRSQGDLTSSQ) is cleaved from the precursor. His-158 bears the Tele-8alpha-FAD histidine mark. 2 residues coordinate substrate: Gln-392 and His-394. The active-site Proton acceptor is the His-498. Asn-541 is an active-site residue.

It belongs to the GMC oxidoreductase family. As to quaternary structure, homotetramer. It depends on FAD as a cofactor.

It catalyses the reaction D-glucose + O2 = 2-dehydro-D-glucose + H2O2. Its function is as follows. Catalyzes the oxidation of various aldopyranoses and disaccharides on carbon-2 to the corresponding 2-keto sugars concomitant with the reduction of O(2) to H(2)O(2). The preferred substrate is D-glucose which is converted to 2-dehydro-D-glucose. Acts also on D-xylose, L-sorbose, D-galactose and 1,5-anhydroglucitol, a diagnostic marker of diabetes mellitus. This Tricholoma matsutake (Matsutake mushroom) protein is Pyranose 2-oxidase (p2ox).